Reading from the N-terminus, the 564-residue chain is Type 2 DNA topoisomerase 6 subunit B (564 aa).

Residues Asn-46, Asp-78, 99–100, 109–116, and Lys-471 each bind ATP; these read TK and GQQGIGIS.

Belongs to the TOP6B family. As to quaternary structure, homodimer. Heterotetramer of two Top6A and two Top6B chains.

The enzyme catalyses ATP-dependent breakage, passage and rejoining of double-stranded DNA.. Functionally, relaxes both positive and negative superturns and exhibits a strong decatenase activity. The chain is Type 2 DNA topoisomerase 6 subunit B from Pyrococcus horikoshii (strain ATCC 700860 / DSM 12428 / JCM 9974 / NBRC 100139 / OT-3).